The following is a 163-amino-acid chain: Beta-carbonic anhydrase 1 (163 aa).

Zn(2+)-binding residues include Cys35, Asp37, His88, and Cys91.

The protein belongs to the beta-class carbonic anhydrase family. As to quaternary structure, homotetramer. It depends on Zn(2+) as a cofactor.

The enzyme catalyses hydrogencarbonate + H(+) = CO2 + H2O. Catalyzes the reversible hydration of carbon dioxide to form bicarbonate. The chain is Beta-carbonic anhydrase 1 from Mycobacterium bovis (strain ATCC BAA-935 / AF2122/97).